The chain runs to 657 residues: MRLKQLTNLNTLLLLTVCLALGITLWWSQRAMERPFQLLDQYLELSQRFDEQVARNIRQYLGSGDAVRQQAALQALESLAEALPELPPDLARTLAPSLAELREFSAGDLLAAGKLAGDPQGLLLQAERDLTGNLEQWSAYLDAAAGQPQAGAYRTPLLLASLHLTRLSLARAKLVESANPALAGDVERELANLREQAGRIEALPLLGVLDEQRSASDDFAAMMGLAGDAEAGAGNAEDRGVALRRELASLLQRYPDELRRTRDLIERRQQLSADTGARLDAVRQALATLEPQVRGERQRLQGQVRLIQGGMIALILLIALAIDSLQRRLARVLGQLVPALSAWADGDFSRPISLRTRTEDLRNLEDSLNRLRSFLAELVGAIHRRAEQVAGSSQTLAEVSSGLHAGVERQAGDTGQIRDALGDMEAAIQQVAGDASQTADASRSAGQAVEHGQRVIGESLGGLRELVDEVQGNAQSIERLAEESATIGSVLTVIRSIAEQTNLLALNAAIEAARAGDQGRGFAVVAEEVRSLAQRTAGATEEIQQLIGRLQQAARQSVEAMRSQVEHAERTAEQAGAAEGALDEVVAAIHTIGVMAERIAEGSTQQSQAVGEIRSHSERIHALGGENLRLIGHSREQGEQLRQLGGDLRTTVQAFRL.

Topologically, residues 1–5 (MRLKQ) are cytoplasmic. The helical transmembrane segment at 6–26 (LTNLNTLLLLTVCLALGITLW) threads the bilayer. Residues 27-305 (WSQRAMERPF…ERQRLQGQVR (279 aa)) are Periplasmic-facing. The chain crosses the membrane as a helical span at residues 306-326 (LIQGGMIALILLIALAIDSLQ). Positions 327–380 (RRLARVLGQLVPALSAWADGDFSRPISLRTRTEDLRNLEDSLNRLRSFLAELVG) constitute an HAMP domain. Over 327–657 (RRLARVLGQL…LRTTVQAFRL (331 aa)) the chain is Cytoplasmic. One can recognise a Methyl-accepting transducer domain in the interval 385–621 (RAEQVAGSSQ…EIRSHSERIH (237 aa)).

The protein belongs to the methyl-accepting chemotaxis (MCP) protein family.

The protein resides in the cell inner membrane. Functionally, chemotactic-signal transducers respond to changes in the concentration of attractants and repellents in the environment, transduce a signal from the outside to the inside of the cell, and facilitate sensory adaptation through the variation of the level of methylation. Chemoreceptor for inorganic phosphate, which is required for taxis at low concentrations of phosphate. Is also responsible for the positive chemotaxis toward 4-chloroaniline (4CA) and catechol. Does not recognize inorganic phosphate directly, but via a complex between the periplasmic protein PstS and inorganic phosphate. The protein is Methyl-accepting chemotaxis protein CtpL of Pseudomonas aeruginosa (strain ATCC 15692 / DSM 22644 / CIP 104116 / JCM 14847 / LMG 12228 / 1C / PRS 101 / PAO1).